The following is a 340-amino-acid chain: Extracellular matrix protein-binding protein emp (340 aa).

Residues 1–26 form the signal peptide; that stretch reads MKKKLLVLTMSTLFATQIMNSNHAKA.

The protein localises to the cell surface. Adhesin that binds to the host cell extracellular matrix proteins fibronectin, fibrinogen, collagen, and vitronectin. This Staphylococcus aureus (strain USA300) protein is Extracellular matrix protein-binding protein emp (emp).